Reading from the N-terminus, the 477-residue chain is Bifunctional protein HldE (477 aa).

Positions 1–318 are ribokinase; that stretch reads MKLSMPRFDQ…RAIQREEGSE (318 aa). Residue 194 to 197 participates in ATP binding; it reads NLSE. Asp-263 is an active-site residue. Positions 343–477 are cytidylyltransferase; that stretch reads FTNGCFDILH…EKIRKTDKAE (135 aa).

It in the N-terminal section; belongs to the carbohydrate kinase PfkB family. The protein in the C-terminal section; belongs to the cytidylyltransferase family. As to quaternary structure, homodimer.

The enzyme catalyses D-glycero-beta-D-manno-heptose 7-phosphate + ATP = D-glycero-beta-D-manno-heptose 1,7-bisphosphate + ADP + H(+). The catalysed reaction is D-glycero-beta-D-manno-heptose 1-phosphate + ATP + H(+) = ADP-D-glycero-beta-D-manno-heptose + diphosphate. It participates in nucleotide-sugar biosynthesis; ADP-L-glycero-beta-D-manno-heptose biosynthesis; ADP-L-glycero-beta-D-manno-heptose from D-glycero-beta-D-manno-heptose 7-phosphate: step 1/4. The protein operates within nucleotide-sugar biosynthesis; ADP-L-glycero-beta-D-manno-heptose biosynthesis; ADP-L-glycero-beta-D-manno-heptose from D-glycero-beta-D-manno-heptose 7-phosphate: step 3/4. Catalyzes the phosphorylation of D-glycero-D-manno-heptose 7-phosphate at the C-1 position to selectively form D-glycero-beta-D-manno-heptose-1,7-bisphosphate. Functionally, catalyzes the ADP transfer from ATP to D-glycero-beta-D-manno-heptose 1-phosphate, yielding ADP-D-glycero-beta-D-manno-heptose. The protein is Bifunctional protein HldE of Pseudomonas fluorescens (strain ATCC BAA-477 / NRRL B-23932 / Pf-5).